The sequence spans 252 residues: Beta-crystallin B1 (252 aa).

Composition is skewed to low complexity over residues 1–15 (MSQA…TVAV) and 24–37 (KGAP…SPGT). Positions 1–42 (MSQAAKASASATVAVNPGPDTKGKGAPPAGTSPSPGTTLAPT) are disordered. Ser2 carries the post-translational modification N-acetylserine. The segment at 2–58 (SQAAKASASATVAVNPGPDTKGKGAPPAGTSPSPGTTLAPTTVPITSAKAAELPPGN) is N-terminal arm. Beta/gamma crystallin 'Greek key' domains are found at residues 59 to 98 (YRLV…IVSA) and 99 to 143 (GPWV…RPIK). Positions 144–148 (MDAQE) are connecting peptide. Beta/gamma crystallin 'Greek key' domains lie at 149 to 190 (HKIS…KVSS) and 191 to 233 (GTWV…RRLR). A C-terminal arm region spans residues 235–252 (KQWHLEGSFPVLATEPPK).

It belongs to the beta/gamma-crystallin family. Homo/heterodimer, or complexes of higher-order. The structure of beta-crystallin oligomers seems to be stabilized through interactions between the N-terminal arms. In terms of processing, specific cleavages in the N-terminal arm occur during lens maturation and give rise to truncated forms, leading to impaired oligomerization and protein insolubilization.

Functionally, crystallins are the dominant structural components of the vertebrate eye lens. The polypeptide is Beta-crystallin B1 (CRYBB1) (Homo sapiens (Human)).